Consider the following 425-residue polypeptide: Actin-related protein 3 (425 aa).

Belongs to the actin family. ARP3 subfamily. As to quaternary structure, component of the Arp2/3 complex, at least composed of arx-1, arx-2, arx-4 and arx-6.

The protein resides in the cytoplasm. The protein localises to the cytoskeleton. Functionally, functions as ATP-binding component of the Arp2/3 complex which is involved in regulation of actin polymerization and together with an activating nucleation-promoting factor (NPF) mediates the formation of branched actin networks. Seems to contact the pointed end of the daughter actin filament. Plays a role in time-dependent memory loss and the retention of conditioned behavior over time. This is Actin-related protein 3 from Caenorhabditis elegans.